The chain runs to 140 residues: Large ribosomal subunit protein uL11 (140 aa).

This sequence belongs to the universal ribosomal protein uL11 family. In terms of assembly, part of the ribosomal stalk of the 50S ribosomal subunit. Interacts with L10 and the large rRNA to form the base of the stalk. L10 forms an elongated spine to which L12 dimers bind in a sequential fashion forming a multimeric L10(L12)X complex. In terms of processing, one or more lysine residues are methylated.

In terms of biological role, forms part of the ribosomal stalk which helps the ribosome interact with GTP-bound translation factors. The sequence is that of Large ribosomal subunit protein uL11 from Desulfatibacillum aliphaticivorans.